The following is a 191-amino-acid chain: Probable ribosome biogenesis protein RLP24 (191 aa).

Ser-136 carries the post-translational modification Phosphoserine.

It belongs to the eukaryotic ribosomal protein eL24 family. Associated with nucleolar and cytoplasmic pre-60S particles. At the end of biogenesis it dissociates from cytoplasmic pre-60S particles and is likely to be exchanged for its ribosomal homologue, RPL24.

It is found in the nucleus. The protein resides in the nucleolus. Functionally, involved in the biogenesis of the 60S ribosomal subunit. Ensures the docking of NOG1 to pre-60S particles. The protein is Probable ribosome biogenesis protein RLP24 (RpL24-like) of Drosophila melanogaster (Fruit fly).